A 415-amino-acid chain; its full sequence is Serine hydroxymethyltransferase (415 aa).

Residues Leu117 and 121–123 (GHL) each bind (6S)-5,6,7,8-tetrahydrofolate. Lys226 carries the N6-(pyridoxal phosphate)lysine modification.

The protein belongs to the SHMT family. As to quaternary structure, homodimer. It depends on pyridoxal 5'-phosphate as a cofactor.

It localises to the cytoplasm. The enzyme catalyses (6R)-5,10-methylene-5,6,7,8-tetrahydrofolate + glycine + H2O = (6S)-5,6,7,8-tetrahydrofolate + L-serine. The protein operates within one-carbon metabolism; tetrahydrofolate interconversion. It functions in the pathway amino-acid biosynthesis; glycine biosynthesis; glycine from L-serine: step 1/1. Catalyzes the reversible interconversion of serine and glycine with tetrahydrofolate (THF) serving as the one-carbon carrier. This reaction serves as the major source of one-carbon groups required for the biosynthesis of purines, thymidylate, methionine, and other important biomolecules. Also exhibits THF-independent aldolase activity toward beta-hydroxyamino acids, producing glycine and aldehydes, via a retro-aldol mechanism. This chain is Serine hydroxymethyltransferase, found in Dehalococcoides mccartyi (strain CBDB1).